The chain runs to 475 residues: Aspartic proteinase 39 (475 aa).

The first 23 residues, 1-23 (MELRRKLCIVVAVFVIVIEFASA), serve as a signal peptide directing secretion. The 349-residue stretch at 74–422 (YFTKIKLGSP…DLDNEVIGWA (349 aa)) folds into the Peptidase A1 domain. Asp-92 is a catalytic residue. Residues Asn-124 and Asn-222 are each glycosylated (N-linked (GlcNAc...) asparagine). Asp-303 is a catalytic residue. N-linked (GlcNAc...) asparagine glycans are attached at residues Asn-425 and Asn-446. Ser-449 carries the GPI-anchor amidated serine lipid modification. A propeptide spans 450 to 475 (APRLLMITKLLTILSPLIVMAFTSLA) (removed in mature form).

The protein belongs to the peptidase A1 family. As to expression, highly expressed in pollen and pollen tubes. Mostly expressed in inflorescence, flowers and siliques, and barely in leaves and seedlings.

The protein localises to the cell membrane. The protein resides in the cytoplasm. It localises to the cytosol. Its function is as follows. Displays aspartic proteolytic activity. Together with A36, contributes to pollen and ovule development, including the apical cell wall constitution of the growing pollen tubes. The protein is Aspartic proteinase 39 of Arabidopsis thaliana (Mouse-ear cress).